We begin with the raw amino-acid sequence, 330 residues long: ADP-L-glycero-D-manno-heptose-6-epimerase (330 aa).

Residues 11–12 (FI), 32–33 (DN), Lys-39, Lys-54, 75–79 (EGACS), and Asn-92 contribute to the NADP(+) site. Tyr-139 serves as the catalytic Proton acceptor. Lys-143 is an NADP(+) binding site. Asn-168 is a substrate binding site. Val-169 and Lys-177 together coordinate NADP(+). The active-site Proton acceptor is the Lys-177. Substrate is bound by residues Arg-179, His-186, 200 to 203 (FGEY), Arg-213, and Tyr-292.

The protein belongs to the NAD(P)-dependent epimerase/dehydratase family. HldD subfamily. As to quaternary structure, homopentamer. NADP(+) is required as a cofactor.

It catalyses the reaction ADP-D-glycero-beta-D-manno-heptose = ADP-L-glycero-beta-D-manno-heptose. It functions in the pathway nucleotide-sugar biosynthesis; ADP-L-glycero-beta-D-manno-heptose biosynthesis; ADP-L-glycero-beta-D-manno-heptose from D-glycero-beta-D-manno-heptose 7-phosphate: step 4/4. Functionally, catalyzes the interconversion between ADP-D-glycero-beta-D-manno-heptose and ADP-L-glycero-beta-D-manno-heptose via an epimerization at carbon 6 of the heptose. This Burkholderia ambifaria (strain MC40-6) protein is ADP-L-glycero-D-manno-heptose-6-epimerase.